A 102-amino-acid polypeptide reads, in one-letter code: Large ribosomal subunit protein bL21 (102 aa).

Belongs to the bacterial ribosomal protein bL21 family. Part of the 50S ribosomal subunit. Contacts protein L20.

Its function is as follows. This protein binds to 23S rRNA in the presence of protein L20. This chain is Large ribosomal subunit protein bL21, found in Cytophaga hutchinsonii (strain ATCC 33406 / DSM 1761 / CIP 103989 / NBRC 15051 / NCIMB 9469 / D465).